The chain runs to 363 residues: Phosphoserine aminotransferase (363 aa).

Arg42 serves as a coordination point for L-glutamate. Residues 76–77 (GR), Trp102, Thr156, Asp175, and Gln198 each bind pyridoxal 5'-phosphate. An N6-(pyridoxal phosphate)lysine modification is found at Lys199. 240-241 (NT) lines the pyridoxal 5'-phosphate pocket.

This sequence belongs to the class-V pyridoxal-phosphate-dependent aminotransferase family. SerC subfamily. In terms of assembly, homodimer. It depends on pyridoxal 5'-phosphate as a cofactor.

It localises to the cytoplasm. It catalyses the reaction O-phospho-L-serine + 2-oxoglutarate = 3-phosphooxypyruvate + L-glutamate. The catalysed reaction is 4-(phosphooxy)-L-threonine + 2-oxoglutarate = (R)-3-hydroxy-2-oxo-4-phosphooxybutanoate + L-glutamate. It participates in amino-acid biosynthesis; L-serine biosynthesis; L-serine from 3-phospho-D-glycerate: step 2/3. Its pathway is cofactor biosynthesis; pyridoxine 5'-phosphate biosynthesis; pyridoxine 5'-phosphate from D-erythrose 4-phosphate: step 3/5. In terms of biological role, catalyzes the reversible conversion of 3-phosphohydroxypyruvate to phosphoserine and of 3-hydroxy-2-oxo-4-phosphonooxybutanoate to phosphohydroxythreonine. This chain is Phosphoserine aminotransferase, found in Shewanella piezotolerans (strain WP3 / JCM 13877).